Reading from the N-terminus, the 379-residue chain is Probable 3-phenylpropionic acid transporter (379 aa).

Over 1-4 the chain is Cytoplasmic; the sequence is MVLQ. The helical transmembrane segment at 5 to 31 threads the bilayer; sequence STRWLALGYFTYFFSYGIFLPFWSVWL. Residues 32-37 are Periplasmic-facing; sequence KGIGLT. The chain crosses the membrane as a helical span at residues 38 to 66; it reads PETIGLLLGAGLVARFLGSLLIAPRVSDP. Residues 67–70 are Cytoplasmic-facing; sequence SRLI. Residues 71–96 form a helical membrane-spanning segment; that stretch reads SALRVLALLTLLFAVAFWAGAHVAWL. The Periplasmic portion of the chain corresponds to 97–100; sequence MLVM. A helical transmembrane segment spans residues 101–118; it reads IGFNLFFSPLVPLTDALA. Residues 119-129 are Cytoplasmic-facing; sequence NTWQKQFPLDY. Residues 130-152 traverse the membrane as a helical segment; the sequence is GKVRLWGSVAFVIGSALTGKLVT. The Periplasmic segment spans residues 153-155; it reads MFD. A helical transmembrane segment spans residues 156 to 175; that stretch reads YRVILALLTLGVASMLLGFL. The Cytoplasmic portion of the chain corresponds to 176–207; that stretch reads IRPTIQPQGASRQQESTGWSAWLALVRQNWRF. A helical transmembrane segment spans residues 208 to 227; it reads LACVCLLQGAHAAYYGFSAI. Residues 228 to 231 lie on the Periplasmic side of the membrane; sequence YWQA. Residues 232 to 256 traverse the membrane as a helical segment; that stretch reads AGYSASAVGYLWSLGVVAEVIIFAL. The Cytoplasmic portion of the chain corresponds to 257–266; it reads SNKLFRRCSA. A helical transmembrane segment spans residues 267-286; the sequence is RDMLLISAICGVVRWGIMGA. Residues 287–289 lie on the Periplasmic side of the membrane; it reads TTA. A helical membrane pass occupies residues 290 to 312; that stretch reads LPWLIVVQILHCGTFTVCHLAAM. Residues 313–323 are Cytoplasmic-facing; it reads RYIAARQGSEV. Residues 324-351 traverse the membrane as a helical segment; it reads IRLQAVYSAVAMGGSIAIMTVFAGFLYQ. Residues 352-354 are Periplasmic-facing; the sequence is YLG. Residues 355–375 form a helical membrane-spanning segment; it reads HGVFWVMALVALPAMFLRPKV. The Cytoplasmic segment spans residues 376 to 379; sequence VPSC.

It belongs to the major facilitator superfamily. Phenyl propionate permease (PPP) (TC 2.A.1.27) family.

The protein localises to the cell inner membrane. Its function is as follows. Probable permease involved in the uptake of 3-phenylpropionic acid. The polypeptide is Probable 3-phenylpropionic acid transporter (hcaT) (Escherichia coli (strain K12)).